The sequence spans 708 residues: Polyribonucleotide nucleotidyltransferase (708 aa).

Residues Asp490 and Asp496 each coordinate Mg(2+). The region spanning 557-619 (PRIETMTIPK…KSIDDAIRLI (63 aa)) is the KH domain. The S1 motif domain occupies 629–699 (GEVYKGKVRS…KTGKFKLSRK (71 aa)).

This sequence belongs to the polyribonucleotide nucleotidyltransferase family. Mg(2+) serves as cofactor.

The protein localises to the cytoplasm. It catalyses the reaction RNA(n+1) + phosphate = RNA(n) + a ribonucleoside 5'-diphosphate. Involved in mRNA degradation. Catalyzes the phosphorolysis of single-stranded polyribonucleotides processively in the 3'- to 5'-direction. This chain is Polyribonucleotide nucleotidyltransferase, found in Bacteroides fragilis (strain ATCC 25285 / DSM 2151 / CCUG 4856 / JCM 11019 / LMG 10263 / NCTC 9343 / Onslow / VPI 2553 / EN-2).